The chain runs to 286 residues: GTP cyclohydrolase MptA (286 aa).

It belongs to the GTP cyclohydrolase IV family. As to quaternary structure, homodimer. Requires Fe(2+) as cofactor.

It carries out the reaction GTP + H2O = 7,8-dihydroneopterin 2',3'-cyclic phosphate + formate + diphosphate + H(+). It functions in the pathway cofactor biosynthesis; 5,6,7,8-tetrahydromethanopterin biosynthesis. Converts GTP to 7,8-dihydro-D-neopterin 2',3'-cyclic phosphate, the first intermediate in the biosynthesis of coenzyme methanopterin. In Thermoplasma acidophilum (strain ATCC 25905 / DSM 1728 / JCM 9062 / NBRC 15155 / AMRC-C165), this protein is GTP cyclohydrolase MptA.